The primary structure comprises 529 residues: Methionine--tRNA ligase (529 aa).

Positions 12–22 match the 'HIGH' region motif; the sequence is YYVNALPHIGS. Cys127, Cys130, Cys145, and His148 together coordinate Zn(2+). The 'KMSKS' region signature appears at 301–305; it reads KMGKS. Residue Lys304 participates in ATP binding.

Belongs to the class-I aminoacyl-tRNA synthetase family. MetG type 2A subfamily. In terms of assembly, monomer. The cofactor is Zn(2+).

It localises to the cytoplasm. It carries out the reaction tRNA(Met) + L-methionine + ATP = L-methionyl-tRNA(Met) + AMP + diphosphate. Is required not only for elongation of protein synthesis but also for the initiation of all mRNA translation through initiator tRNA(fMet) aminoacylation. The sequence is that of Methionine--tRNA ligase from Thermosynechococcus vestitus (strain NIES-2133 / IAM M-273 / BP-1).